A 443-amino-acid polypeptide reads, in one-letter code: UDP-N-acetylmuramoylalanine--D-glutamate ligase (443 aa).

Residue Gly-116–Thr-122 coordinates ATP.

It belongs to the MurCDEF family.

The protein resides in the cytoplasm. The enzyme catalyses UDP-N-acetyl-alpha-D-muramoyl-L-alanine + D-glutamate + ATP = UDP-N-acetyl-alpha-D-muramoyl-L-alanyl-D-glutamate + ADP + phosphate + H(+). It participates in cell wall biogenesis; peptidoglycan biosynthesis. In terms of biological role, cell wall formation. Catalyzes the addition of glutamate to the nucleotide precursor UDP-N-acetylmuramoyl-L-alanine (UMA). This chain is UDP-N-acetylmuramoylalanine--D-glutamate ligase, found in Novosphingobium aromaticivorans (strain ATCC 700278 / DSM 12444 / CCUG 56034 / CIP 105152 / NBRC 16084 / F199).